A 214-amino-acid polypeptide reads, in one-letter code: Probable transaldolase (214 aa).

The active-site Schiff-base intermediate with substrate is the Lys83.

It belongs to the transaldolase family. Type 3B subfamily.

It localises to the cytoplasm. The catalysed reaction is D-sedoheptulose 7-phosphate + D-glyceraldehyde 3-phosphate = D-erythrose 4-phosphate + beta-D-fructose 6-phosphate. The protein operates within carbohydrate degradation; pentose phosphate pathway; D-glyceraldehyde 3-phosphate and beta-D-fructose 6-phosphate from D-ribose 5-phosphate and D-xylulose 5-phosphate (non-oxidative stage): step 2/3. Its function is as follows. Transaldolase is important for the balance of metabolites in the pentose-phosphate pathway. In Leptospira biflexa serovar Patoc (strain Patoc 1 / Ames), this protein is Probable transaldolase.